A 365-amino-acid chain; its full sequence is Histidinol-phosphate aminotransferase (365 aa).

Lys-220 carries the N6-(pyridoxal phosphate)lysine modification.

This sequence belongs to the class-II pyridoxal-phosphate-dependent aminotransferase family. Histidinol-phosphate aminotransferase subfamily. Homodimer. Pyridoxal 5'-phosphate is required as a cofactor.

The catalysed reaction is L-histidinol phosphate + 2-oxoglutarate = 3-(imidazol-4-yl)-2-oxopropyl phosphate + L-glutamate. It functions in the pathway amino-acid biosynthesis; L-histidine biosynthesis; L-histidine from 5-phospho-alpha-D-ribose 1-diphosphate: step 7/9. This chain is Histidinol-phosphate aminotransferase, found in Neisseria meningitidis serogroup A / serotype 4A (strain DSM 15465 / Z2491).